A 301-amino-acid polypeptide reads, in one-letter code: tRNA pseudouridine synthase B (301 aa).

Asp47 (nucleophile) is an active-site residue.

The protein belongs to the pseudouridine synthase TruB family. Type 1 subfamily.

It catalyses the reaction uridine(55) in tRNA = pseudouridine(55) in tRNA. Its function is as follows. Responsible for synthesis of pseudouridine from uracil-55 in the psi GC loop of transfer RNAs. This Cereibacter sphaeroides (strain ATCC 17025 / ATH 2.4.3) (Rhodobacter sphaeroides) protein is tRNA pseudouridine synthase B.